The primary structure comprises 304 residues: Large ribosomal subunit protein uL2m (304 aa).

The transit peptide at M1–K60 directs the protein to the mitochondrion.

It belongs to the universal ribosomal protein uL2 family. In terms of assembly, component of the mitochondrial ribosome large subunit (39S) which comprises a 16S rRNA and about 50 distinct proteins.

The protein resides in the mitochondrion. In Rattus norvegicus (Rat), this protein is Large ribosomal subunit protein uL2m (Mrpl2).